The primary structure comprises 27 residues: Voltage-dependent anion-selective channel protein (27 aa).

This sequence belongs to the eukaryotic mitochondrial porin family. As to quaternary structure, interacts with hexokinases. In terms of tissue distribution, photoreceptors.

The protein resides in the mitochondrion outer membrane. Functionally, forms a channel through the cell membrane that allows diffusion of small hydrophilic molecules. This Doryteuthis pealeii (Longfin inshore squid) protein is Voltage-dependent anion-selective channel protein.